A 723-amino-acid chain; its full sequence is Ribosome quality control complex subunit 1 (723 aa).

The interval 21–125 is disordered; that stretch reads SNSNANKMTS…DKGSDDDDDD (105 aa). Residues 27–37 are compositionally biased toward polar residues; it reads KMTSGKSTAGN. The segment covering 93–108 has biased composition (basic residues); the sequence is SSRRKKNKKAKRKQKN. Basic and acidic residues predominate over residues 109–118; the sequence is HTAEAAKDKG. Ser119 is modified (phosphoserine). A Phosphothreonine modification is found at Thr158. At Ser160 the chain carries Phosphoserine.

The protein belongs to the TCF25 family. As to quaternary structure, component of the ribosome quality control complex (RQC), composed of the E3 ubiquitin ligase RKR1/LTN1, RQC1 and RQC2, as well as CDC48 and its ubiquitin-binding cofactors. RQC forms a stable complex with 60S ribosomal subunits.

The protein resides in the cytoplasm. In terms of biological role, component of the ribosome quality control complex (RQC), a ribosome-associated complex that mediates ubiquitination and extraction of incompletely synthesized nascent chains for proteasomal degradation. Within the RQC complex, RQC1 is essential for the recruitment of CDC48 to incompletely synthesized nascent polypeptides that are ubiquitinated by RKR1/LTN1. This chain is Ribosome quality control complex subunit 1, found in Saccharomyces cerevisiae (strain ATCC 204508 / S288c) (Baker's yeast).